The primary structure comprises 205 residues: Urease accessory protein UreE (205 aa).

Over residues 171–192 the composition is skewed to basic and acidic residues; that stretch reads HHGHSHSHDHDHDHDHDHDHQH. Residues 171–205 are disordered; it reads HHGHSHSHDHDHDHDHDHDHQHGPCCSHGHHHGHR.

Belongs to the UreE family.

The protein resides in the cytoplasm. Involved in urease metallocenter assembly. Binds nickel. Probably functions as a nickel donor during metallocenter assembly. The protein is Urease accessory protein UreE of Burkholderia pseudomallei (strain K96243).